Reading from the N-terminus, the 22-residue chain is Probable ATP-dependent Clp protease proteolytic subunit (22 aa).

It belongs to the peptidase S14 family. Component of the chloroplastic Clp protease core complex.

It carries out the reaction Hydrolysis of proteins to small peptides in the presence of ATP and magnesium. alpha-casein is the usual test substrate. In the absence of ATP, only oligopeptides shorter than five residues are hydrolyzed (such as succinyl-Leu-Tyr-|-NHMec, and Leu-Tyr-Leu-|-Tyr-Trp, in which cleavage of the -Tyr-|-Leu- and -Tyr-|-Trp bonds also occurs).. Functionally, cleaves peptides in various proteins in a process that requires ATP hydrolysis. Has a chymotrypsin-like activity. Plays a major role in the degradation of misfolded proteins. This chain is Probable ATP-dependent Clp protease proteolytic subunit, found in Populus euphratica (Euphrates poplar).